A 213-amino-acid polypeptide reads, in one-letter code: Ras-like protein rasU (213 aa).

21 to 28 contacts GTP; it reads GDGGVGKT. The Effector region signature appears at 43–51; the sequence is YDPTIEDLY. GTP-binding positions include 68-72 and 126-129; these read DTAGQ and NKSD. C210 bears the Cysteine methyl ester mark. C210 is lipidated: S-geranylgeranyl cysteine. A propeptide spans 211-213 (removed in mature form); sequence KMI.

The protein belongs to the small GTPase superfamily. Ras family.

It localises to the cell membrane. It carries out the reaction GTP + H2O = GDP + phosphate + H(+). Ras proteins bind GDP/GTP and possess intrinsic GTPase activity. The chain is Ras-like protein rasU (rasU) from Dictyostelium discoideum (Social amoeba).